Reading from the N-terminus, the 619-residue chain is UvrABC system protein C (619 aa).

In terms of domain architecture, GIY-YIG spans 20–98 (TAPGVYRMYA…IKSLSPRYNV (79 aa)). The UVR domain occupies 207–242 (DQLGEEIMHSMQQASEALEFERAARLRDLLSSLRSM).

The protein belongs to the UvrC family. In terms of assembly, interacts with UvrB in an incision complex.

The protein localises to the cytoplasm. Functionally, the UvrABC repair system catalyzes the recognition and processing of DNA lesions. UvrC both incises the 5' and 3' sides of the lesion. The N-terminal half is responsible for the 3' incision and the C-terminal half is responsible for the 5' incision. In Xanthomonas euvesicatoria pv. vesicatoria (strain 85-10) (Xanthomonas campestris pv. vesicatoria), this protein is UvrABC system protein C.